Reading from the N-terminus, the 428-residue chain is Gamma-glutamyl phosphate reductase (428 aa).

The protein belongs to the gamma-glutamyl phosphate reductase family.

The protein resides in the cytoplasm. The catalysed reaction is L-glutamate 5-semialdehyde + phosphate + NADP(+) = L-glutamyl 5-phosphate + NADPH + H(+). The protein operates within amino-acid biosynthesis; L-proline biosynthesis; L-glutamate 5-semialdehyde from L-glutamate: step 2/2. Catalyzes the NADPH-dependent reduction of L-glutamate 5-phosphate into L-glutamate 5-semialdehyde and phosphate. The product spontaneously undergoes cyclization to form 1-pyrroline-5-carboxylate. The protein is Gamma-glutamyl phosphate reductase of Anaeromyxobacter sp. (strain Fw109-5).